Reading from the N-terminus, the 237-residue chain is Zinc finger protein 22 (237 aa).

The interval 1-33 (MRLGKPKGGISRSASQGKTYESKRKTARQRQKW) is disordered. N6-acetyllysine occurs at positions 18 and 23. 5 C2H2-type zinc fingers span residues 55–82 (YKCTKCSKSFSQSSTLFQHKKIHTGKKS), 83–110 (HKCADCGKSFFQSSNLIQHRRIHTGEKP), 111–138 (YKCDECGERFKQSSNLIQHQRIHTGEKP), 139–166 (YCCDECGRCFSQSSHLIQHQRTHTGEKP), and 167–194 (YQCEECDKCFSQSSHLRQHMKVHKEKKS). A compositionally biased stretch (basic residues) spans 188 to 217 (VHKEKKSHKRGKNARAKTHPVSWKRGKGRK). Residues 188–218 (VHKEKKSHKRGKNARAKTHPVSWKRGKGRKA) are disordered.

Belongs to the krueppel C2H2-type zinc-finger protein family. In terms of tissue distribution, highly expressed in the ameloblast layer of mandibular incisors, moderately expressed in submandibular gland, calvaria, kidney and lung, and expressed at low levels in brain and thymus.

Its subcellular location is the nucleus. Its function is as follows. Binds DNA through the consensus sequence 5'-CAATG-3'. May be involved in transcriptional regulation and may play a role in tooth formation. This Rattus norvegicus (Rat) protein is Zinc finger protein 22 (Znf22).